Here is a 1036-residue protein sequence, read N- to C-terminus: Nitrogen catabolic enzyme regulatory protein (1036 aa).

A compositionally biased stretch (low complexity) spans 1 to 17 (MAASTTTPTATTRPFFT). Disordered stretches follow at residues 1–126 (MAAS…HTQS), 207–240 (TDRTHRFSESAPQKSTSGIARLRKSSEQTQSQGS), 256–298 (TPAG…QSQH), 318–351 (GYLPRHLRKTSIDETSKRNPNRKRPADFSPHVSA), 590–743 (SSQG…PTTC), 792–976 (RGSG…PTTQ), and 1000–1028 (GMPNGQAGQMMGASSSSGPGSGPSRTGAE). Residues 23–34 (TEHDFRFPRRPG) show a composition bias toward basic and acidic residues. Residues 45 to 56 (AAMSSSSANNNH) are compositionally biased toward low complexity. 3 repeat units span residues 49–55 (SSSANNN), 87–92 (SSSNNN), and 105–110 (SSSNNN). Residues 49-110 (SSSANNNHNQ…INHQSSSNNN (62 aa)) are 3 X approximate repeats. The segment covering 100–114 (NINHQSSSNNNISKN) has biased composition (low complexity). Residues 652 to 661 (PRSQSQSFRQ) show a composition bias toward polar residues. Residues 703–714 (SSGLSSVPASRP) are compositionally biased toward low complexity. Residues 723–736 (QGSTTNLQGAAGNS) show a composition bias toward polar residues. Residues 743–767 (CTNCFTQTTPLWRRNPDGQPLCNAC) form a GATA-type zinc finger. A compositionally biased stretch (polar residues) spans 802–827 (GTSTRSKKNASMSAAARKNSTLSITS). Composition is skewed to low complexity over residues 828 to 861 (NANNQPPAQVATPPAQQQVRASSVNESESPASGP) and 868 to 899 (AGSTPTSYHGSTGSTSGAVGGKSVIPIASAPP). Polar residues predominate over residues 927–961 (SAGSDQPVSAGAVSSSGMDVDSPANSTGSNETMPT). The span at 1000 to 1023 (GMPNGQAGQMMGASSSSGPGSGPS) shows a compositional bias: low complexity.

As to quaternary structure, interacts with nmr.

It localises to the nucleus. Functionally, major nitrogen regulatory protein. During conditions of nitrogen limitation it turns on the expression of genes for enzymes which are required for the use of a variety of secondary nitrogen sources, including nitrates, purines, amino acids, and proteins. In Neurospora crassa (strain ATCC 24698 / 74-OR23-1A / CBS 708.71 / DSM 1257 / FGSC 987), this protein is Nitrogen catabolic enzyme regulatory protein (nit-2).